The chain runs to 729 residues: Fatty acid oxidation complex subunit alpha (729 aa).

An enoyl-CoA hydratase/isomerase region spans residues 1–189 (MLYKGDTLYL…KIGLVDGVVK (189 aa)). Asp296 contacts substrate. The tract at residues 311-729 (ETPKHAAVLG…ARPVGELKTA (419 aa)) is 3-hydroxyacyl-CoA dehydrogenase. NAD(+) contacts are provided by residues Met324, Asp343, 400-402 (VVE), Lys407, and Ser429. His450 (for 3-hydroxyacyl-CoA dehydrogenase activity) is an active-site residue. Asn453 provides a ligand contact to NAD(+). Positions 500 and 660 each coordinate substrate.

This sequence in the N-terminal section; belongs to the enoyl-CoA hydratase/isomerase family. The protein in the C-terminal section; belongs to the 3-hydroxyacyl-CoA dehydrogenase family. As to quaternary structure, heterotetramer of two alpha chains (FadB) and two beta chains (FadA).

It carries out the reaction a (3S)-3-hydroxyacyl-CoA + NAD(+) = a 3-oxoacyl-CoA + NADH + H(+). The catalysed reaction is a (3S)-3-hydroxyacyl-CoA = a (2E)-enoyl-CoA + H2O. The enzyme catalyses a 4-saturated-(3S)-3-hydroxyacyl-CoA = a (3E)-enoyl-CoA + H2O. It catalyses the reaction (3S)-3-hydroxybutanoyl-CoA = (3R)-3-hydroxybutanoyl-CoA. It carries out the reaction a (3Z)-enoyl-CoA = a 4-saturated (2E)-enoyl-CoA. The catalysed reaction is a (3E)-enoyl-CoA = a 4-saturated (2E)-enoyl-CoA. The protein operates within lipid metabolism; fatty acid beta-oxidation. Its function is as follows. Involved in the aerobic and anaerobic degradation of long-chain fatty acids via beta-oxidation cycle. Catalyzes the formation of 3-oxoacyl-CoA from enoyl-CoA via L-3-hydroxyacyl-CoA. It can also use D-3-hydroxyacyl-CoA and cis-3-enoyl-CoA as substrate. The polypeptide is Fatty acid oxidation complex subunit alpha (Enterobacter cloacae).